A 335-amino-acid polypeptide reads, in one-letter code: Zinc-type alcohol dehydrogenase-like protein SAV2186 (335 aa).

The protein belongs to the zinc-containing alcohol dehydrogenase family. Quinone oxidoreductase subfamily.

The polypeptide is Zinc-type alcohol dehydrogenase-like protein SAV2186 (Staphylococcus aureus (strain Mu50 / ATCC 700699)).